Consider the following 235-residue polypeptide: Isoprenyl transferase (235 aa).

Aspartate 21 is an active-site residue. Residue aspartate 21 coordinates Mg(2+). Residues 22–25, tryptophan 26, lysine 34, histidine 38, and 66–68 contribute to the substrate site; these read GNAR and SSE. Asparagine 69 (proton acceptor) is an active-site residue. Substrate contacts are provided by residues tryptophan 70, arginine 72, arginine 183, and 189–191; that span reads RIS. Glutamate 202 serves as a coordination point for Mg(2+).

It belongs to the UPP synthase family. Homodimer. It depends on Mg(2+) as a cofactor.

Its function is as follows. Catalyzes the condensation of isopentenyl diphosphate (IPP) with allylic pyrophosphates generating different type of terpenoids. This is Isoprenyl transferase from Rickettsia conorii (strain ATCC VR-613 / Malish 7).